The primary structure comprises 362 residues: Phosphoserine aminotransferase (362 aa).

2 residues coordinate L-glutamate: Ser-9 and Arg-42. Pyridoxal 5'-phosphate is bound by residues 76 to 77 (GR), Trp-102, Thr-153, Asp-174, and Gln-197. N6-(pyridoxal phosphate)lysine is present on Lys-198. 239–240 (NT) contributes to the pyridoxal 5'-phosphate binding site.

It belongs to the class-V pyridoxal-phosphate-dependent aminotransferase family. SerC subfamily. As to quaternary structure, homodimer. Requires pyridoxal 5'-phosphate as cofactor.

It is found in the cytoplasm. The catalysed reaction is O-phospho-L-serine + 2-oxoglutarate = 3-phosphooxypyruvate + L-glutamate. It carries out the reaction 4-(phosphooxy)-L-threonine + 2-oxoglutarate = (R)-3-hydroxy-2-oxo-4-phosphooxybutanoate + L-glutamate. The protein operates within amino-acid biosynthesis; L-serine biosynthesis; L-serine from 3-phospho-D-glycerate: step 2/3. It functions in the pathway cofactor biosynthesis; pyridoxine 5'-phosphate biosynthesis; pyridoxine 5'-phosphate from D-erythrose 4-phosphate: step 3/5. Its function is as follows. Catalyzes the reversible conversion of 3-phosphohydroxypyruvate to phosphoserine and of 3-hydroxy-2-oxo-4-phosphonooxybutanoate to phosphohydroxythreonine. Is involved in both pyridoxine and serine biosynthesis. In Escherichia coli (strain K12), this protein is Phosphoserine aminotransferase (serC).